The primary structure comprises 106 residues: Pyruvate decarboxylase 2 (106 aa).

Mg(2+) contacts are provided by asparagine 10 and glycine 12.

It belongs to the TPP enzyme family. As to quaternary structure, homotetramer. A metal cation serves as cofactor. Thiamine diphosphate is required as a cofactor.

It catalyses the reaction a 2-oxocarboxylate + H(+) = an aldehyde + CO2. The chain is Pyruvate decarboxylase 2 (PDC2) from Zea mays (Maize).